Reading from the N-terminus, the 1222-residue chain is ATP-dependent helicase/nuclease subunit A (1222 aa).

The region spanning 39 to 495 (QKRTAQQIEA…ILLKENFRSQ (457 aa)) is the UvrD-like helicase ATP-binding domain. Position 60 to 67 (60 to 67 (ASAGSGKT)) interacts with ATP. The UvrD-like helicase C-terminal domain occupies 524–810 (QLIAGSHAQT…NLMTIHKSKG (287 aa)).

It belongs to the helicase family. AddA subfamily. Heterodimer of AddA and AddB/RexB. The cofactor is Mg(2+).

The catalysed reaction is Couples ATP hydrolysis with the unwinding of duplex DNA by translocating in the 3'-5' direction.. It catalyses the reaction ATP + H2O = ADP + phosphate + H(+). The heterodimer acts as both an ATP-dependent DNA helicase and an ATP-dependent, dual-direction single-stranded exonuclease. Recognizes the chi site generating a DNA molecule suitable for the initiation of homologous recombination. The AddA nuclease domain is required for chi fragment generation; this subunit has the helicase and 3' -&gt; 5' nuclease activities. This Streptococcus pyogenes serotype M2 (strain MGAS10270) protein is ATP-dependent helicase/nuclease subunit A.